Here is a 137-residue protein sequence, read N- to C-terminus: Large ribosomal subunit protein uL16 (137 aa).

Belongs to the universal ribosomal protein uL16 family. In terms of assembly, part of the 50S ribosomal subunit.

Its function is as follows. Binds 23S rRNA and is also seen to make contacts with the A and possibly P site tRNAs. The polypeptide is Large ribosomal subunit protein uL16 (Streptococcus mutans serotype c (strain ATCC 700610 / UA159)).